The chain runs to 94 residues: Cell division protein FtsB (94 aa).

Residues 1 to 3 (MRW) lie on the Cytoplasmic side of the membrane. The helical transmembrane segment at 4 to 21 (LTVGLLAAIGLLQYPLWV) threads the bilayer. The Periplasmic portion of the chain corresponds to 22 to 94 (GKGGWLKVWE…VQIPEKVPGK (73 aa)). Residues 31 to 73 (EYDRQLQQQKEVTRKLEIRNAGLDAEVRDLKQGYDAIEERARF) are a coiled coil.

The protein belongs to the FtsB family. As to quaternary structure, part of a complex composed of FtsB, FtsL and FtsQ.

The protein resides in the cell inner membrane. Functionally, essential cell division protein. May link together the upstream cell division proteins, which are predominantly cytoplasmic, with the downstream cell division proteins, which are predominantly periplasmic. This is Cell division protein FtsB from Dechloromonas aromatica (strain RCB).